The sequence spans 368 residues: MHVSMIIFVSIFSIKYIMATKYTMRVLIPKYGKGMKTEYFYNMIKESRPNASPLKITESYGRDAHLNLYALSTSQSLMLTYGKDEFWKIIENKLGNEVNETIDLDDLYPSRYRMRFVFKDLISSDNDLYMDTKFSDKITSTKQQKKWVKESVKKTKNKLEEISHSAKLWNATIYMDILKDDNMELYDDKTVTKIKKQGKVKQLPVYCHMDKSVNQYTNEIVAKRKNPIEIVDKKDVSVAPLRFNAFMATIQQKFVTGNKKDPFWANITEEYLTSVIGESELIFPAKFKVIMELENLTDPDEDKKIESTISNTVYNREEMVNMLDILIQMLIVRLNEESHPGKIWNVKATIVGIREMYDDVKTIKHFLV.

An N-terminal signal peptide occupies residues 1–19 (MHVSMIIFVSIFSIKYIMA). Asn99, Asn170, Asn266, and Asn295 each carry an N-linked (GlcNAc...) asparagine; by host glycan.

This is an uncharacterized protein from Ostreid herpesvirus 1 (isolate France) (OsHV-1).